Here is a 451-residue protein sequence, read N- to C-terminus: Chromosomal replication initiator protein DnaA (451 aa).

The domain I, interacts with DnaA modulators stretch occupies residues 1-72 (MSLPTSLWDK…TELLDELSDT (72 aa)). Residues 72–114 (TPPQIRLQIGSRSTEMPTKNSHEPSHRKAAAPPAGTTISHTQA) are domain II. The span at 81-90 (GSRSTEMPTK) shows a compositional bias: polar residues. The disordered stretch occupies residues 81–106 (GSRSTEMPTKNSHEPSHRKAAAPPAG). The interval 115–331 (NINSNFTFDS…GALKRVIANA (217 aa)) is domain III, AAA+ region. ATP is bound by residues G159, G161, K162, and T163. The segment at 332–451 (HFTGQSITVD…YKNLMRILSG (120 aa)) is domain IV, binds dsDNA.

This sequence belongs to the DnaA family. In terms of assembly, oligomerizes as a right-handed, spiral filament on DNA at oriC.

It is found in the cytoplasm. Functionally, plays an essential role in the initiation and regulation of chromosomal replication. ATP-DnaA binds to the origin of replication (oriC) to initiate formation of the DNA replication initiation complex once per cell cycle. Binds the DnaA box (a 9 base pair repeat at the origin) and separates the double-stranded (ds)DNA. Forms a right-handed helical filament on oriC DNA; dsDNA binds to the exterior of the filament while single-stranded (ss)DNA is stabiized in the filament's interior. The ATP-DnaA-oriC complex binds and stabilizes one strand of the AT-rich DNA unwinding element (DUE), permitting loading of DNA polymerase. After initiation quickly degrades to an ADP-DnaA complex that is not apt for DNA replication. Binds acidic phospholipids. This chain is Chromosomal replication initiator protein DnaA, found in Coxiella burnetii (strain CbuK_Q154) (Coxiella burnetii (strain Q154)).